Consider the following 460-residue polypeptide: Proline--tRNA ligase (460 aa).

This sequence belongs to the class-II aminoacyl-tRNA synthetase family. ProS type 3 subfamily. In terms of assembly, homodimer.

It localises to the cytoplasm. It catalyses the reaction tRNA(Pro) + L-proline + ATP = L-prolyl-tRNA(Pro) + AMP + diphosphate. Its function is as follows. Catalyzes the attachment of proline to tRNA(Pro) in a two-step reaction: proline is first activated by ATP to form Pro-AMP and then transferred to the acceptor end of tRNA(Pro). The polypeptide is Proline--tRNA ligase (Methanococcus maripaludis (strain C7 / ATCC BAA-1331)).